The chain runs to 299 residues: Bifunctional protein FolD (299 aa).

Residues 168 to 170 (GRS), Ser-193, and Ile-234 contribute to the NADP(+) site.

The protein belongs to the tetrahydrofolate dehydrogenase/cyclohydrolase family. In terms of assembly, homodimer.

The enzyme catalyses (6R)-5,10-methylene-5,6,7,8-tetrahydrofolate + NADP(+) = (6R)-5,10-methenyltetrahydrofolate + NADPH. It carries out the reaction (6R)-5,10-methenyltetrahydrofolate + H2O = (6R)-10-formyltetrahydrofolate + H(+). It functions in the pathway one-carbon metabolism; tetrahydrofolate interconversion. In terms of biological role, catalyzes the oxidation of 5,10-methylenetetrahydrofolate to 5,10-methenyltetrahydrofolate and then the hydrolysis of 5,10-methenyltetrahydrofolate to 10-formyltetrahydrofolate. In Brucella abortus (strain S19), this protein is Bifunctional protein FolD.